The following is a 279-amino-acid chain: Bifunctional protein FolD (279 aa).

NADP(+)-binding positions include 159–161 (GRS), Ser184, and Thr225.

Belongs to the tetrahydrofolate dehydrogenase/cyclohydrolase family. In terms of assembly, homodimer.

The catalysed reaction is (6R)-5,10-methylene-5,6,7,8-tetrahydrofolate + NADP(+) = (6R)-5,10-methenyltetrahydrofolate + NADPH. It catalyses the reaction (6R)-5,10-methenyltetrahydrofolate + H2O = (6R)-10-formyltetrahydrofolate + H(+). The protein operates within one-carbon metabolism; tetrahydrofolate interconversion. Functionally, catalyzes the oxidation of 5,10-methylenetetrahydrofolate to 5,10-methenyltetrahydrofolate and then the hydrolysis of 5,10-methenyltetrahydrofolate to 10-formyltetrahydrofolate. The polypeptide is Bifunctional protein FolD (Methanospirillum hungatei JF-1 (strain ATCC 27890 / DSM 864 / NBRC 100397 / JF-1)).